Consider the following 365-residue polypeptide: Peptide chain release factor 2 (365 aa).

The residue at position 252 (Gln252) is an N5-methylglutamine.

The protein belongs to the prokaryotic/mitochondrial release factor family. In terms of processing, methylated by PrmC. Methylation increases the termination efficiency of RF2.

The protein localises to the cytoplasm. Peptide chain release factor 2 directs the termination of translation in response to the peptide chain termination codons UGA and UAA. The protein is Peptide chain release factor 2 of Escherichia coli O8 (strain IAI1).